Reading from the N-terminus, the 178-residue chain is Alkyl hydroperoxide reductase AhpD (178 aa).

The Proton donor role is filled by cysteine 130. Residues cysteine 130 and cysteine 133 are joined by a disulfide bond. The active-site Cysteine sulfenic acid (-SOH) intermediate is cysteine 133.

This sequence belongs to the AhpD family. In terms of assembly, homotrimer.

It catalyses the reaction N(6)-[(R)-dihydrolipoyl]-L-lysyl-[lipoyl-carrier protein] + a hydroperoxide = N(6)-[(R)-lipoyl]-L-lysyl-[lipoyl-carrier protein] + an alcohol + H2O. In terms of biological role, antioxidant protein with alkyl hydroperoxidase activity. Required for the reduction of the AhpC active site cysteine residues and for the regeneration of the AhpC enzyme activity. This chain is Alkyl hydroperoxide reductase AhpD, found in Mycobacterium ulcerans (strain Agy99).